Here is a 266-residue protein sequence, read N- to C-terminus: Dolichol-phosphate mannosyltransferase subunit 1 (266 aa).

The segment covering 1–19 (MASPGASRGASAATAAAAS) has biased composition (low complexity). The disordered stretch occupies residues 1–31 (MASPGASRGASAATAAAASPRPPQGRSSRRD). Ala2 carries the post-translational modification N-acetylalanine. Ser3 is subject to Phosphoserine. Pro38, Tyr40, Glu42, Ile69, Asp71, Asp124, Ala125, Asp126, Arg153, Arg240, and Lys246 together coordinate GDP-alpha-D-mannose. Asp126 lines the Mg(2+) pocket. Mn(2+) is bound at residue Asp126.

The protein belongs to the glycosyltransferase 2 family. In terms of assembly, component of the dolichol-phosphate mannose (DPM) synthase complex composed of DPM1, DPM2 and DPM3; within the complex, directly interacts with DPM3. This interaction may stabilize DPM1. Mg(2+) serves as cofactor. Requires Mn(2+) as cofactor. Ca(2+) is required as a cofactor.

The protein localises to the endoplasmic reticulum. It carries out the reaction a di-trans,poly-cis-dolichyl phosphate + GDP-alpha-D-mannose = a di-trans,poly-cis-dolichyl beta-D-mannosyl phosphate + GDP. It functions in the pathway protein modification; protein glycosylation. Functionally, transfers mannose from GDP-mannose to dolichol monophosphate to form dolichol phosphate mannose (Dol-P-Man) which is the mannosyl donor in pathways leading to N-glycosylation, glycosyl phosphatidylinositol membrane anchoring, and O-mannosylation of proteins; catalytic subunit of the dolichol-phosphate mannose (DPM) synthase complex. The polypeptide is Dolichol-phosphate mannosyltransferase subunit 1 (DPM1) (Cricetulus griseus (Chinese hamster)).